A 433-amino-acid polypeptide reads, in one-letter code: Histidine--tRNA ligase (433 aa).

Belongs to the class-II aminoacyl-tRNA synthetase family. As to quaternary structure, homodimer.

The protein localises to the cytoplasm. It catalyses the reaction tRNA(His) + L-histidine + ATP = L-histidyl-tRNA(His) + AMP + diphosphate + H(+). This is Histidine--tRNA ligase from Azoarcus sp. (strain BH72).